The following is a 595-amino-acid chain: Probable serine/threonine-protein kinase fhkC (595 aa).

Positions 1 to 84 are disordered; it reads MNSNKEETTA…MTEDNSKEED (84 aa). Low complexity predominate over residues 18-31; that stretch reads EEQQQQQQPQQQEQ. Residues 32–49 show a composition bias toward polar residues; it reads INTTTASTTSNGENTASD. Residues 50-70 show a composition bias toward low complexity; the sequence is NNNNSNNNNNNNTNNTNTNNN. Positions 116 to 170 constitute an FHA domain; it reads IILGRSKGVCNYTFTSPTVSGKHCKIYRDPTVKSRNVAFVDDTSTNGTFINNEVI. A Protein kinase domain is found at 218-479; sequence YDLREVLGTG…IDQALNHPWF (262 aa). Residues 224–232 and lysine 247 each bind ATP; that span reads LGTGNFASV. Aspartate 342 functions as the Proton acceptor in the catalytic mechanism. Position 377 is a phosphothreonine; by autocatalysis (threonine 377). Residues 494–595 form a disordered region; it reads KLEFPPPSTN…DEHEQKKVKN (102 aa). Residues 508–520 show a composition bias toward polar residues; the sequence is PTPNTTSSNSQLV. Low complexity predominate over residues 530-567; sequence DNTTDNNNNNNNNNNNNNNNNNNNTTNNSNNIDNNNGN. Basic and acidic residues predominate over residues 585-595; it reads NDEHEQKKVKN.

Belongs to the protein kinase superfamily. CAMK Ser/Thr protein kinase family. CHK2 subfamily.

The catalysed reaction is L-seryl-[protein] + ATP = O-phospho-L-seryl-[protein] + ADP + H(+). It carries out the reaction L-threonyl-[protein] + ATP = O-phospho-L-threonyl-[protein] + ADP + H(+). This Dictyostelium discoideum (Social amoeba) protein is Probable serine/threonine-protein kinase fhkC (fhkC).